The sequence spans 703 residues: Elongation factor G 1 (703 aa).

The region spanning 8–290 is the tr-type G domain; it reads ERYRNIGISA…AVIDFLPSPV (283 aa). Residues 17 to 24, 88 to 92, and 142 to 145 each bind GTP; these read AHIDAGKT, DTPGH, and NKMD.

This sequence belongs to the TRAFAC class translation factor GTPase superfamily. Classic translation factor GTPase family. EF-G/EF-2 subfamily.

It is found in the cytoplasm. Functionally, catalyzes the GTP-dependent ribosomal translocation step during translation elongation. During this step, the ribosome changes from the pre-translocational (PRE) to the post-translocational (POST) state as the newly formed A-site-bound peptidyl-tRNA and P-site-bound deacylated tRNA move to the P and E sites, respectively. Catalyzes the coordinated movement of the two tRNA molecules, the mRNA and conformational changes in the ribosome. The sequence is that of Elongation factor G 1 from Ralstonia nicotianae (strain ATCC BAA-1114 / GMI1000) (Ralstonia solanacearum).